The following is a 425-amino-acid chain: MSSILPFTPPIVKRLLGWKKGEQNGQEEKWCEKAVKSLVKKLKKTGQLDELEKAITTQNVNTKCITIPRSLDGRLQVSHRKGLPHVIYCRLWRWPDLHSHHELRAMELCEFAFNMKKDEVCVNPYHYQRVETPVLPPVLVPRHTEIPAEFPPLDDYSHSIPENTNFPAGIEPQSNIPETPPPGYLSEDGETSDHQMNHSMDAGSPNLSPNPMSPAHNNLDLQPVTYCEPAFWCSISYYELNQRVGETFHASQPSMTVDGFTDPSNSERFCLGLLSNVNRNAAVELTRRHIGRGVRLYYIGGEVFAECLSDSAIFVQSPNCNQRYGWHPATVCKIPPGCNLKIFNNQEFAALLAQSVNQGFEAVYQLTRMCTIRMSFVKGWGAEYRRQTVTSTPCWIELHLNGPLQWLDKVLTQMGSPSIRCSSVS.

Ser-2 carries the N-acetylserine modification. Thr-8 carries the post-translational modification Phosphothreonine; by CDK2 and CDK4. Residues 10 to 136 form the MH1 domain; that stretch reads PIVKRLLGWK…YQRVETPVLP (127 aa). A Glycyl lysine isopeptide (Lys-Gly) (interchain with G-Cter in ubiquitin) cross-link involves residue Lys-33. Cys-64 lines the Zn(2+) pocket. Lys-81 is covalently cross-linked (Glycyl lysine isopeptide (Lys-Gly) (interchain with G-Cter in ubiquitin)). Residues Cys-109, Cys-121, and His-126 each coordinate Zn(2+). The interval 137-231 is linker; it reads PVLVPRHTEI…QPVTYCEPAF (95 aa). Polar residues predominate over residues 165–177; it reads NFPAGIEPQSNIP. The interval 165 to 208 is disordered; it reads NFPAGIEPQSNIPETPPPGYLSEDGETSDHQMNHSMDAGSPNLS. The residue at position 179 (Thr-179) is a Phosphothreonine; by CDK2, CDK4 and MAPK. A Phosphoserine; by GSK3 and MAPK modification is found at Ser-204. At Ser-208 the chain carries Phosphoserine; by MAPK. A Phosphoserine; by CDK2 and CDK4 modification is found at Ser-213. Residues 232–425 form the MH2 domain; that stretch reads WCSISYYELN…SPSIRCSSVS (194 aa). The segment at 271 to 324 is sufficient for interaction with XPO4; sequence LGLLSNVNRNAAVELTRRHIGRGVRLYYIGGEVFAECLSDSAIFVQSPNCNQRY. N6-acetyllysine is present on Lys-378. At Ser-416 the chain carries Phosphoserine. Ser-418 is modified (phosphoserine; by CK1). A phosphoserine; by TGFBR1 mark is found at Ser-422, Ser-423, and Ser-425.

Belongs to the dwarfin/SMAD family. Monomer; in the absence of TGF-beta. Homooligomer; in the presence of TGF-beta. Heterotrimer; forms a heterotrimer in the presence of TGF-beta consisting of two molecules of C-terminally phosphorylated SMAD2 or SMAD3 and one of SMAD4 to form the transcriptionally active SMAD2/SMAD3-SMAD4 complex. Part of a complex consisting of MAGI2/ARIP1, ACVR2A, ACVR1B and SMAD3. Forms a complex with SMAD2 and TRIM33 upon addition of TGF-beta. Found in a complex composed of SMAD3, RAN and XPO4; within the complex interacts directly with XPO4. Component of the multimeric complex SMAD3/SMAD4/JUN/FOS which forms at the AP1 promoter site; required for synergistic transcriptional activity in response to TGF-beta. Part of a ternary complex composed of SMAD3, ITCH/AIP4 and NEDD9/HEF1; within the complex NEDD9/HEF1 interacts (via N-terminus) with ITCH/AIP4; the complex mediates ubiquitination and proteasomal degradation of NEDD9/HEF1. Interacts with NEDD9; the interaction promotes NEDD9 ubiquitination and proteasomal degradation. Interacts (via an N-terminal domain) with JUN (via its basic DNA binding and leucine zipper domains); this interaction is essential for DNA binding and cooperative transcriptional activity in response to TGF-beta. Identified in a complex that contains at least ZNF451, SMAD2, SMAD3 and SMAD4. Interacts with PPM1A; the interaction dephosphorylates SMAD3 in the C-terminal SXS motif leading to disruption of the SMAD2/3-SMAD4 complex, nuclear export and termination of TGF-beta signaling. Interacts (via MH2 domain) with ZMIZ1 (via SP-RING-type domain); in the TGF-beta signaling pathway increases the activity of the SMAD3/SMAD4 transcriptional complex. Interacts (when phosphorylated) with RNF111; RNF111 acts as an enhancer of the transcriptional responses by mediating ubiquitination and degradation of SMAD3 inhibitors. Interacts (dephosphorylated form via the MH1 and MH2 domains) with RANBP3 (via its C-terminal R domain); the interaction results in the export of dephosphorylated SMAD3 out of the nucleus and termination of the TGF-beta signaling. Interacts (via MH2 domain) with LEMD3; the interaction represses SMAD3 transcriptional activity through preventing the formation of the heteromeric complex with SMAD4 and translocation to the nucleus. Interacts (via the linker region) with EP300 (C-terminal); the interaction promotes SMAD3 acetylation and is enhanced by TGF-beta phosphorylation in the C-terminal of SMAD3. This interaction can be blocked by competitive binding of adenovirus oncoprotein E1A to the same C-terminal site on EP300, which then results in partially inhibited SMAD3/SMAD4 transcriptional activity. Interacts with TGFBR1. Interacts with TGFB1I1. Interacts with PRDM16. Interacts with SNW1. Interacts (via MH2 domain) with ZFYVE9. Interacts with HDAC1. Interacts with TGIF2. Interacts with SKOR1. Interacts with SKOR2. Interacts with DACH1; the interaction inhibits the TGF-beta signaling. Interacts with RBPMS. Interacts (via MH2 domain) with MECOM. Interacts with WWTR1 (via its coiled-coil domain). Interacts with SKI; the interaction represses SMAD3 transcriptional activity. Interacts with MEN1. Interacts with IL1F7. Interaction with CSNK1G2. Interacts with PDPK1 (via PH domain). Interacts with DAB2; the interactions are enhanced upon TGF-beta stimulation. Interacts with USP15. Interacts with PPP5C; the interaction decreases SMAD3 phosphorylation and protein levels. Interacts with LDLRAD4 (via the SMAD interaction motif). Interacts with PMEPA1. Interacts with ZNF451. Interacts with ZFHX3. Interacts weakly with ZNF8. Interacts with STUB1, HSPA1A, HSPA1B, HSP90AA1 and HSP90AB1. Interacts with YAP1 (when phosphorylated at 'Ser-55'). Interacts with MAGI2/ARIP1. Interacts (via MH2 domain) with CITED2 (via C-terminus). Interacts with HGS. Interacts with WWP1. Interacts with TTRAP. Interacts with FOXL2. Interacts with PML. Interacts with NEDD4L; the interaction requires TGF-beta stimulation. Interacts with ZC3H3. Interacts with TGIF. Interacts with CREBBP. Interacts with ATF2. Interacts with NEDD9; the interaction is inhibited by oxidation of NEDD9. Interacts with MTMR4; negatively regulates TGF-beta signaling through SMAD3 dephosphorylation and retention in endosomes. Phosphorylated on serine and threonine residues. Enhanced phosphorylation in the linker region on Thr-179, Ser-204 and Ser-208 on EGF and TGF-beta treatment. Ser-208 is the main site of MAPK-mediated phosphorylation. CDK-mediated phosphorylation occurs in a cell-cycle dependent manner and inhibits both the transcriptional activity and antiproliferative functions of SMAD3. This phosphorylation is inhibited by flavopiridol. Maximum phosphorylation at the G(1)/S junction. Also phosphorylated on serine residues in the C-terminal SXS motif by TGFBR1 and ACVR1. TGFBR1-mediated phosphorylation at these C-terminal sites is required for interaction with SMAD4, nuclear location and transactivational activity, and appears to be a prerequisite for the TGF-beta mediated phosphorylation in the linker region. Dephosphorylated in the C-terminal SXS motif by PPM1A. This dephosphorylation disrupts the interaction with SMAD4, promotes nuclear export and terminates TGF-beta-mediated signaling. Phosphorylation at Ser-418 by CSNK1G2/CK1 promotes ligand-dependent ubiquitination and subsequent proteasome degradation, thus inhibiting SMAD3-mediated TGF-beta responses. Phosphorylated by PDPK1. In terms of processing, acetylation in the nucleus by EP300 in the MH2 domain regulates positively its transcriptional activity and is enhanced by TGF-beta. Post-translationally, poly-ADP-ribosylated by PARP1 and PARP2. ADP-ribosylation negatively regulates SMAD3 transcriptional responses during the course of TGF-beta signaling. Ubiquitinated. Monoubiquitinated, leading to prevent DNA-binding. Deubiquitination by USP15 alleviates inhibition and promotes activation of TGF-beta target genes. Ubiquitinated by RNF111, leading to its degradation: only SMAD3 proteins that are 'in use' are targeted by RNF111, RNF111 playing a key role in activating SMAD3 and regulating its turnover. Undergoes STUB1-mediated ubiquitination and degradation. In terms of tissue distribution, highly expressed in the brain and ovary. Detected in the pyramidal cells of the hippocampus, granule cells of the dentate gyrus, granular cells of the cerebral cortex and the granulosa cells of the ovary.

The protein resides in the cytoplasm. It localises to the nucleus. Receptor-regulated SMAD (R-SMAD) that is an intracellular signal transducer and transcriptional modulator activated by TGF-beta (transforming growth factor) and activin type 1 receptor kinases. Binds the TRE element in the promoter region of many genes that are regulated by TGF-beta and, on formation of the SMAD3/SMAD4 complex, activates transcription. Also can form a SMAD3/SMAD4/JUN/FOS complex at the AP-1/SMAD site to regulate TGF-beta-mediated transcription. Has an inhibitory effect on wound healing probably by modulating both growth and migration of primary keratinocytes and by altering the TGF-mediated chemotaxis of monocytes. This effect on wound healing appears to be hormone-sensitive. Regulator of chondrogenesis and osteogenesis and inhibits early healing of bone fractures. Positively regulates PDPK1 kinase activity by stimulating its dissociation from the 14-3-3 protein YWHAQ which acts as a negative regulator. In Sus scrofa (Pig), this protein is Mothers against decapentaplegic homolog 3 (SMAD3).